The following is a 263-amino-acid chain: 3-methyl-2-oxobutanoate hydroxymethyltransferase (263 aa).

Mg(2+) is bound by residues D45 and D84. 3-methyl-2-oxobutanoate-binding positions include 45-46 (DS), D84, and K112. E114 lines the Mg(2+) pocket. E181 acts as the Proton acceptor in catalysis.

The protein belongs to the PanB family. Homodecamer; pentamer of dimers. Mg(2+) serves as cofactor.

The protein localises to the cytoplasm. The catalysed reaction is 3-methyl-2-oxobutanoate + (6R)-5,10-methylene-5,6,7,8-tetrahydrofolate + H2O = 2-dehydropantoate + (6S)-5,6,7,8-tetrahydrofolate. The protein operates within cofactor biosynthesis; (R)-pantothenate biosynthesis; (R)-pantoate from 3-methyl-2-oxobutanoate: step 1/2. In terms of biological role, catalyzes the reversible reaction in which hydroxymethyl group from 5,10-methylenetetrahydrofolate is transferred onto alpha-ketoisovalerate to form ketopantoate. This Chromohalobacter salexigens (strain ATCC BAA-138 / DSM 3043 / CIP 106854 / NCIMB 13768 / 1H11) protein is 3-methyl-2-oxobutanoate hydroxymethyltransferase.